A 234-amino-acid chain; its full sequence is Uridylate kinase (234 aa).

10–11 contacts ATP; it reads GS. Glycine 44 is a UMP binding site. The ATP site is built by glycine 45 and arginine 49. Residues aspartate 66 and 114–120 contribute to the UMP site; that span reads ITPGQTT. 3 residues coordinate ATP: threonine 140, tyrosine 146, and aspartate 149.

Belongs to the UMP kinase family. In terms of assembly, homohexamer.

Its subcellular location is the cytoplasm. The catalysed reaction is UMP + ATP = UDP + ADP. The protein operates within pyrimidine metabolism; CTP biosynthesis via de novo pathway; UDP from UMP (UMPK route): step 1/1. With respect to regulation, inhibited by UTP. Its function is as follows. Catalyzes the reversible phosphorylation of UMP to UDP. The chain is Uridylate kinase from Methanoregula boonei (strain DSM 21154 / JCM 14090 / 6A8).